We begin with the raw amino-acid sequence, 267 residues long: Interleukin-2 receptor subunit alpha (267 aa).

A signal peptide spans 1 to 21 (MEPHLLMLGFLSFTIVPGCWA). Residues 22–79 (ELCLYDPPEVPNATFKALSYKNGTILNCECKRGFRRLNELVYMACLGNSWSNNCQCTS) form the Sushi 1 domain. Residues 22-235 (ELCLYDPPEV…ETFVFTKEYQ (214 aa)) are Extracellular-facing. 3 disulfide bridges follow: C24/C66, C49/C75, and C51/C77. 2 N-linked (GlcNAc...) asparagine glycosylation sites follow: N33 and N43. Residues 82 to 93 (HDNSREQVTPQP) are compositionally biased toward polar residues. Residues 82 to 108 (HDNSREQVTPQPEGQKEQQTTDTQKST) form a disordered region. Residues 98-108 (EQQTTDTQKST) show a composition bias toward low complexity. Residues 118–181 (GHCREPPPWR…WTHPQLTCVD (64 aa)) form the Sushi 2 domain. Disulfide bonds link C120–C163 and C147–C179. Residues 191–215 (SEESQGSRNSFPESEASCPTPNTDF) are disordered. Positions 192–215 (EESQGSRNSFPESEASCPTPNTDF) are enriched in polar residues. Residues 236–256 (VAVASCIFLLLSILLLSGFTW) traverse the membrane as a helical segment. Residues 257-267 (QHRWRKSRRTI) lie on the Cytoplasmic side of the membrane.

As to quaternary structure, non-covalent dimer of an alpha and a beta subunit. IL2R exists in 3 different forms: a high affinity dimer, an intermediate affinity monomer (beta subunit), and a low affinity monomer (alpha subunit). The high and intermediate affinity forms also associate with a gamma subunit.

The protein resides in the membrane. Functionally, receptor for interleukin-2. The receptor is involved in the regulation of immune tolerance by controlling regulatory T cells (TREGs) activity. TREGs suppress the activation and expansion of autoreactive T-cells. This is Interleukin-2 receptor subunit alpha (Il2ra) from Rattus norvegicus (Rat).